A 336-amino-acid polypeptide reads, in one-letter code: Fructose-1,6-bisphosphatase class 1 (336 aa).

Mg(2+)-binding residues include E90, D112, L114, and D115. Residues 115-118, N207, and K273 contribute to the substrate site; that span reads DGSS. Mg(2+) is bound at residue E279.

This sequence belongs to the FBPase class 1 family. In terms of assembly, homotetramer. Requires Mg(2+) as cofactor.

Its subcellular location is the cytoplasm. It carries out the reaction beta-D-fructose 1,6-bisphosphate + H2O = beta-D-fructose 6-phosphate + phosphate. It participates in carbohydrate biosynthesis; gluconeogenesis. The sequence is that of Fructose-1,6-bisphosphatase class 1 from Xanthomonas oryzae pv. oryzae (strain PXO99A).